The primary structure comprises 138 residues: Large ribosomal subunit protein uL16 (138 aa).

It belongs to the universal ribosomal protein uL16 family. As to quaternary structure, part of the 50S ribosomal subunit.

Functionally, binds 23S rRNA and is also seen to make contacts with the A and possibly P site tRNAs. The chain is Large ribosomal subunit protein uL16 from Ureaplasma parvum serovar 3 (strain ATCC 27815 / 27 / NCTC 11736).